Here is a 218-residue protein sequence, read N- to C-terminus: Hypoxanthine-guanine phosphoribosyltransferase (218 aa).

An N-acetylalanine modification is found at Ala-2. Residue Lys-69 participates in GMP binding. Lys-103 is modified (N6-acetyllysine). A Glycyl lysine isopeptide (Lys-Gly) (interchain with G-Cter in SUMO1); alternate cross-link involves residue Lys-115. Lys-115 is covalently cross-linked (Glycyl lysine isopeptide (Lys-Gly) (interchain with G-Cter in SUMO2); alternate). Residues 134-142 (EDIIDTGKT), Lys-166, 186-188 (KFV), and Asp-194 each bind GMP. Catalysis depends on Asp-138, which acts as the Proton acceptor. Residue Thr-142 is modified to Phosphothreonine. Asp-194 is a binding site for Mg(2+).

The protein belongs to the purine/pyrimidine phosphoribosyltransferase family. Homotetramer. It depends on Mg(2+) as a cofactor.

Its subcellular location is the cytoplasm. The enzyme catalyses IMP + diphosphate = hypoxanthine + 5-phospho-alpha-D-ribose 1-diphosphate. It carries out the reaction GMP + diphosphate = guanine + 5-phospho-alpha-D-ribose 1-diphosphate. It participates in purine metabolism; IMP biosynthesis via salvage pathway; IMP from hypoxanthine: step 1/1. In terms of biological role, converts guanine to guanosine monophosphate, and hypoxanthine to inosine monophosphate. Transfers the 5-phosphoribosyl group from 5-phosphoribosylpyrophosphate onto the purine. Plays a central role in the generation of purine nucleotides through the purine salvage pathway. The protein is Hypoxanthine-guanine phosphoribosyltransferase (HPRT1) of Canis lupus familiaris (Dog).